Reading from the N-terminus, the 357-residue chain is Histidine biosynthesis bifunctional protein HisB (357 aa).

The segment at 1 to 168 (MTPILFIDRD…GIAHALADAP (168 aa)) is histidinol-phosphatase. Catalysis depends on aspartate 8, which acts as the Nucleophile. Mg(2+) contacts are provided by aspartate 8, aspartate 10, and aspartate 128. Aspartate 10 (proton donor) is an active-site residue. The tract at residues 169-357 (RIAVVQRDTK…TALPTTKGAL (189 aa)) is imidazoleglycerol-phosphate dehydratase.

It in the N-terminal section; belongs to the histidinol-phosphatase family. This sequence in the C-terminal section; belongs to the imidazoleglycerol-phosphate dehydratase family. The cofactor is Mg(2+).

The protein localises to the cytoplasm. The enzyme catalyses D-erythro-1-(imidazol-4-yl)glycerol 3-phosphate = 3-(imidazol-4-yl)-2-oxopropyl phosphate + H2O. It catalyses the reaction L-histidinol phosphate + H2O = L-histidinol + phosphate. The protein operates within amino-acid biosynthesis; L-histidine biosynthesis; L-histidine from 5-phospho-alpha-D-ribose 1-diphosphate: step 6/9. It functions in the pathway amino-acid biosynthesis; L-histidine biosynthesis; L-histidine from 5-phospho-alpha-D-ribose 1-diphosphate: step 8/9. The protein is Histidine biosynthesis bifunctional protein HisB of Stenotrophomonas maltophilia (strain R551-3).